A 215-amino-acid polypeptide reads, in one-letter code: NADH-quinone oxidoreductase subunit C (215 aa).

It belongs to the complex I 30 kDa subunit family. As to quaternary structure, NDH-1 is composed of 14 different subunits. Subunits NuoB, C, D, E, F, and G constitute the peripheral sector of the complex.

Its subcellular location is the cell inner membrane. It catalyses the reaction a quinone + NADH + 5 H(+)(in) = a quinol + NAD(+) + 4 H(+)(out). NDH-1 shuttles electrons from NADH, via FMN and iron-sulfur (Fe-S) centers, to quinones in the respiratory chain. The immediate electron acceptor for the enzyme in this species is believed to be ubiquinone. Couples the redox reaction to proton translocation (for every two electrons transferred, four hydrogen ions are translocated across the cytoplasmic membrane), and thus conserves the redox energy in a proton gradient. The polypeptide is NADH-quinone oxidoreductase subunit C (Bordetella parapertussis (strain 12822 / ATCC BAA-587 / NCTC 13253)).